A 475-amino-acid chain; its full sequence is MAGSLGNLVVAGGGESSDSEEDYWDIGYMDRPPQTTKGSLATEERDETFKKALTSGDVSLVEELLNSGMSVESSFQFGWTPLMCAVNIANVELVRILLDRGANASFDKDQYTILMAACAAHASESQILKTVELLLSRNANPNVACRKCMTPVMYAAREGHAQVVALLVAHGAEINAQDENGYTALTWAARHGHKSVVLKLLELGANKTIQTKDGKTAGEIAKRNKHPELFTLLSLTVNPLQGKLQHLTKEEAICRLLTTDGDAGKEHKFSSYTAFGDLEVFLHGLGLEHMTELLKERDITLRQLLTMRKEDFTENGITNIRDQQKILDAVKELQVEEIKFGELTEVINLEISSDEFLNFLLKLNKQCGHLTTAVQNIINQLPVNSHKIVLEWGSSQRFTSVCENLVCNVEDLGEEVCKLKDLIQKLQNDQKNDPCRVLPMETYSTWNSRFLKRATFTVCGFGFLLFIFKLTFRKS.

Residues 1 to 24 (MAGSLGNLVVAGGGESSDSEEDYW) form a disordered region. A phosphoserine mark is found at S16, S17, and S19. 6 ANK repeats span residues 44–73 (ERDETFKKALTSGDVSLVEELLNSGMSVES), 77–106 (FGWTPLMCAVNIANVELVRILLDRGANASF), 109–146 (DQYTILMAACAAHASESQILKTVELLLSRNANPNVACR), 147–176 (KCMTPVMYAAREGHAQVVALLVAHGAEINA), 180–209 (NGYTALTWAARHGHKSVVLKLLELGANKTI), and 213–242 (DGKTAGEIAKRNKHPELFTLLSLTVNPLQG). The SAM domain occupies 273–336 (TAFGDLEVFL…LDAVKELQVE (64 aa)).

In terms of assembly, interacts with DDX4, PIWIL1, RANBP9 and TDRD1.

It localises to the cytoplasm. Plays a central role during spermatogenesis by repressing transposable elements and preventing their mobilization, which is essential for the germline integrity. Acts via the piRNA metabolic process, which mediates the repression of transposable elements during meiosis by forming complexes composed of piRNAs and Piwi proteins and governs the methylation and subsequent repression of transposons. Its association with pi-bodies suggests a participation in the primary piRNAs metabolic process. Required prior to the pachytene stage to facilitate the production of multiple types of piRNAs, including those associated with repeats involved in the regulation of retrotransposons. May act by mediating protein-protein interactions during germ cell maturation. The protein is Ankyrin repeat, SAM and basic leucine zipper domain-containing protein 1 (ASZ1) of Notamacropus eugenii (Tammar wallaby).